The sequence spans 227 residues: E3 ubiquitin-protein ligase ZNRF1 (227 aa).

The tract at residues 1 to 42 is disordered; the sequence is MGGKQSTAARSRGPFPGVSTDDSAVPPPGGAPHFGHYRTGGG. A lipid anchor (N-myristoyl glycine) is attached at Gly2. Residues 2 to 10 are required for endosomal and lysosomal localization and myristoylation; sequence GGKQSTAAR. Ser50, Ser52, and Ser53 each carry phosphoserine. Positions 68 to 105 are disordered; sequence PFGLYTPASRGTGDSERAPGGGGSASDSTYAHGNGYQE. A Phosphotyrosine; by SRC modification is found at Tyr103. Ser123 bears the Phosphoserine mark. The RING-type; atypical zinc finger occupies 184–225; that stretch reads CVICLEELLQGDTIARLPCLCIYHKSCIDSWFEVNRSCPEHP.

Interacts with AKT1, GLUL and TUBB2A. Interacts with ZNRF2. Interacts (via its RING domain) with UBE2N. Interacts (when phosphorylated) with YWHAE. In terms of processing, N-myristoylation targets ZNRF1 to intracellular membranes. Post-translationally, phosphorylated by SRC at Tyr-103; leading to 'Lys-63'-linked ubiquitination of TLR3, lysosomal trafficking and degradation. As to expression, expressed primarily in the nervous system, with expression higher in developing brain relative to adult. Expressed at low levels in testis and thymus.

It localises to the endosome. Its subcellular location is the lysosome. It is found in the membrane. The protein resides in the cytoplasmic vesicle. The protein localises to the secretory vesicle. It localises to the synaptic vesicle membrane. It catalyses the reaction S-ubiquitinyl-[E2 ubiquitin-conjugating enzyme]-L-cysteine + [acceptor protein]-L-lysine = [E2 ubiquitin-conjugating enzyme]-L-cysteine + N(6)-ubiquitinyl-[acceptor protein]-L-lysine.. It participates in protein modification; protein ubiquitination. In terms of biological role, E3 ubiquitin-protein ligase that plays a role in different processes including cell differentiation, receptor recycling or regulation of inflammation. Mediates the ubiquitination of AKT1 and GLUL, thereby playing a role in neuron cells differentiation. Plays a role in the establishment and maintenance of neuronal transmission and plasticity. Regulates Schwann cells differentiation by mediating ubiquitination of GLUL. Promotes neurodegeneration by mediating 'Lys-48'-linked polyubiquitination and subsequent degradation of AKT1 in axons: degradation of AKT1 prevents AKT1-mediated phosphorylation of GSK3B, leading to GSK3B activation and phosphorylation of DPYSL2/CRMP2 followed by destabilization of microtubule assembly in axons. Ubiquitinates the Na(+)/K(+) ATPase alpha-1 subunit/ATP1A1 and thereby influences its endocytosis and/or degradation. Controls ligand-induced EGFR signaling via mediating receptor ubiquitination and recruitment of the ESCRT machinery. Acts as a negative feedback mechanism controlling TLR3 trafficking by mediating TLR3 'Lys-63'-linked polyubiquitination to reduce type I IFN production. Modulates inflammation by promoting caveolin-1/CAV1 ubiquitination and degradation to regulate TLR4-activated immune response. The polypeptide is E3 ubiquitin-protein ligase ZNRF1 (ZNRF1) (Homo sapiens (Human)).